A 397-amino-acid chain; its full sequence is Serpin-Z7 (397 aa).

At Ala2 the chain carries N-acetylalanine. The interval 344–368 is RCL; that stretch reads GTKAGAATGDVIVDRSLPIRMDFVA.

The protein belongs to the serpin family. Highly expressed in endosperm, at intermediate level in embryo and at lower levels in roots.

In terms of biological role, inhibits chymotrypsin in vitro. The protein is Serpin-Z7 (PAZ7) of Hordeum vulgare (Barley).